The following is a 76-amino-acid chain: Exodeoxyribonuclease 7 small subunit (76 aa).

This sequence belongs to the XseB family. In terms of assembly, heterooligomer composed of large and small subunits.

The protein localises to the cytoplasm. It catalyses the reaction Exonucleolytic cleavage in either 5'- to 3'- or 3'- to 5'-direction to yield nucleoside 5'-phosphates.. Bidirectionally degrades single-stranded DNA into large acid-insoluble oligonucleotides, which are then degraded further into small acid-soluble oligonucleotides. This Geobacter metallireducens (strain ATCC 53774 / DSM 7210 / GS-15) protein is Exodeoxyribonuclease 7 small subunit.